A 154-amino-acid chain; its full sequence is Histone H2B type F-M (154 aa).

Low complexity predominate over residues 1–18; it reads MAAASAMAEASSETTSEE. The tract at residues 1 to 61 is disordered; the sequence is MAAASAMAEA…RGDSFGDSFT (61 aa). Basic residues predominate over residues 34-50; that stretch reads QKQKRRGCRGSRRRHAN.

Belongs to the histone H2B family. As to quaternary structure, the nucleosome is a histone octamer containing two molecules each of H2A, H2B, H3 and H4 assembled in one H3-H4 heterotetramer and two H2A-H2B heterodimers. The octamer wraps approximately 147 bp of DNA.

It is found in the nucleus. Its subcellular location is the chromosome. In terms of biological role, core component of nucleosome. Nucleosomes wrap and compact DNA into chromatin, limiting DNA accessibility to the cellular machineries which require DNA as a template. Histones thereby play a central role in transcription regulation, DNA repair, DNA replication and chromosomal stability. DNA accessibility is regulated via a complex set of post-translational modifications of histones, also called histone code, and nucleosome remodeling. The protein is Histone H2B type F-M of Homo sapiens (Human).